Reading from the N-terminus, the 417-residue chain is Serine hydroxymethyltransferase 2 (417 aa).

(6S)-5,6,7,8-tetrahydrofolate-binding positions include Leu-121 and 125–127 (GHL). Lys-229 is subject to N6-(pyridoxal phosphate)lysine. Residue 354–356 (SPF) participates in (6S)-5,6,7,8-tetrahydrofolate binding.

This sequence belongs to the SHMT family. In terms of assembly, homodimer. It depends on pyridoxal 5'-phosphate as a cofactor.

Its subcellular location is the cytoplasm. The enzyme catalyses (6R)-5,10-methylene-5,6,7,8-tetrahydrofolate + glycine + H2O = (6S)-5,6,7,8-tetrahydrofolate + L-serine. Its pathway is one-carbon metabolism; tetrahydrofolate interconversion. The protein operates within amino-acid biosynthesis; glycine biosynthesis; glycine from L-serine: step 1/1. Catalyzes the reversible interconversion of serine and glycine with tetrahydrofolate (THF) serving as the one-carbon carrier. This reaction serves as the major source of one-carbon groups required for the biosynthesis of purines, thymidylate, methionine, and other important biomolecules. Also exhibits THF-independent aldolase activity toward beta-hydroxyamino acids, producing glycine and aldehydes, via a retro-aldol mechanism. The chain is Serine hydroxymethyltransferase 2 from Pseudomonas fluorescens (strain Pf0-1).